We begin with the raw amino-acid sequence, 553 residues long: uncharacterized protein (553 aa).

A signal peptide spans 1–28 (MRYARHASRYSLFTLAVSAALLPGAGWA).

This is an uncharacterized protein from Pseudomonas aeruginosa (strain ATCC 15692 / DSM 22644 / CIP 104116 / JCM 14847 / LMG 12228 / 1C / PRS 101 / PAO1).